We begin with the raw amino-acid sequence, 370 residues long: ADP-ribosylhydrolase ARH3 (370 aa).

Positions 35, 66, and 67 each coordinate Mg(2+). Residue Asp-66 coordinates substrate. Residues 135-141 (RGSFGNG), His-171, Leu-225, and Ile-261 contribute to the substrate site. The Mg(2+) site is built by Asp-304, Asp-306, and Thr-307.

Belongs to the ADP-ribosylglycohydrolase family. In terms of assembly, monomer. The cofactor is Mg(2+).

It is found in the nucleus. Its subcellular location is the cytoplasm. The protein localises to the chromosome. It localises to the mitochondrion matrix. It carries out the reaction [(1''-&gt;2')-ADP-alpha-D-ribose](n) + H2O = [(1''-&gt;2')-ADP-alpha-D-ribose](n-1) + ADP-D-ribose. It catalyses the reaction 1''-O-acetyl-ADP-alpha-D-ribose + H2O = ADP-D-ribose + acetate + H(+). The catalysed reaction is O-(ADP-D-ribosyl)-L-seryl-[protein] + H2O = ADP-D-ribose + L-seryl-[protein]. The enzyme catalyses alpha-NAD(+) + H2O = ADP-D-ribose + nicotinamide + H(+). Its activity is regulated as follows. The protein undergoes a dramatic conformational switch from closed to open states upon substrate-binding, which enables specific substrate recognition for the 1''-O-linkage. The glutamate flap (Glu-35) blocks substrate entrance to Mg(2+) in the unliganded closed state. In presence of substrate, Glu-35 is ejected from the active site: this closed-to-open transition significantly widens the substrate-binding channel and precisely positions the scissile 1''-O-linkage for cleavage while securing tightly 2'- and 3'-hydroxyls of ADP-ribose. Its function is as follows. ADP-ribosylhydrolase that preferentially hydrolyzes the scissile alpha-O-linkage attached to the anomeric C1'' position of ADP-ribose and acts on different substrates, such as proteins ADP-ribosylated on serine and threonine, free poly(ADP-ribose) and O-acetyl-ADP-D-ribose. Specifically acts as a serine mono-ADP-ribosylhydrolase by mediating the removal of mono-ADP-ribose attached to serine residues on proteins, thereby playing a key role in DNA damage response. Serine ADP-ribosylation of proteins constitutes the primary form of ADP-ribosylation of proteins in response to DNA damage. Does not hydrolyze ADP-ribosyl-arginine, -cysteine, -diphthamide, or -asparagine bonds. Also able to degrade protein free poly(ADP-ribose), which is synthesized in response to DNA damage: free poly(ADP-ribose) acts as a potent cell death signal and its degradation by ADPRHL2 protects cells from poly(ADP-ribose)-dependent cell death, a process named parthanatos. Also hydrolyzes free poly(ADP-ribose) in mitochondria. Specifically digests O-acetyl-ADP-D-ribose, a product of deacetylation reactions catalyzed by sirtuins. Specifically degrades 1''-O-acetyl-ADP-D-ribose isomer, rather than 2''-O-acetyl-ADP-D-ribose or 3''-O-acetyl-ADP-D-ribose isomers. This is ADP-ribosylhydrolase ARH3 (adprs) from Danio rerio (Zebrafish).